A 367-amino-acid polypeptide reads, in one-letter code: tRNA-specific 2-thiouridylase MnmA (367 aa).

Residues 11–18 (AMSGGVDS) and M37 contribute to the ATP site. An interaction with target base in tRNA region spans residues 97–99 (NPD). The active-site Nucleophile is C102. A disulfide bond links C102 and C199. G127 contacts ATP. The tract at residues 149–151 (KDQ) is interaction with tRNA. The active-site Cysteine persulfide intermediate is the C199. The segment at 311–312 (RY) is interaction with tRNA.

It belongs to the MnmA/TRMU family. Interacts with TusE.

The protein resides in the cytoplasm. It catalyses the reaction S-sulfanyl-L-cysteinyl-[protein] + uridine(34) in tRNA + AH2 + ATP = 2-thiouridine(34) in tRNA + L-cysteinyl-[protein] + A + AMP + diphosphate + H(+). In terms of biological role, catalyzes the 2-thiolation of uridine at the wobble position (U34) of tRNA(Lys), tRNA(Glu) and tRNA(Gln), leading to the formation of s(2)U34, the first step of tRNA-mnm(5)s(2)U34 synthesis. Sulfur is provided by IscS, via a sulfur-relay system. Binds ATP and its substrate tRNAs. This Buchnera aphidicola subsp. Schizaphis graminum (strain Sg) protein is tRNA-specific 2-thiouridylase MnmA.